Here is a 131-residue protein sequence, read N- to C-terminus: Holo-[acyl-carrier-protein] synthase (131 aa).

The Mg(2+) site is built by Asp8 and Glu63.

It belongs to the P-Pant transferase superfamily. AcpS family. It depends on Mg(2+) as a cofactor.

The protein localises to the cytoplasm. It carries out the reaction apo-[ACP] + CoA = holo-[ACP] + adenosine 3',5'-bisphosphate + H(+). Its function is as follows. Transfers the 4'-phosphopantetheine moiety from coenzyme A to a Ser of acyl-carrier-protein. This Shewanella piezotolerans (strain WP3 / JCM 13877) protein is Holo-[acyl-carrier-protein] synthase.